A 66-amino-acid chain; its full sequence is ATP synthase protein 8 (66 aa).

The helical transmembrane segment at 8–24 (TWLMMIMSMFLALFIIF) threads the bilayer. K54 bears the N6-acetyllysine; alternate mark. K54 carries the post-translational modification N6-succinyllysine; alternate. The residue at position 57 (K57) is an N6-acetyllysine.

The protein belongs to the ATPase protein 8 family. F-type ATPases have 2 components, CF(1) - the catalytic core - and CF(0) - the membrane proton channel. Component of an ATP synthase complex composed of ATP5PB, ATP5MC1, ATP5F1E, ATP5PD, ATP5ME, ATP5PF, ATP5MF, MT-ATP6, MT-ATP8, ATP5F1A, ATP5F1B, ATP5F1D, ATP5F1C, ATP5PO, ATP5MG, ATP5MK and ATP5MJ. Interacts with PRICKLE3.

It is found in the mitochondrion membrane. Functionally, mitochondrial membrane ATP synthase (F(1)F(0) ATP synthase or Complex V) produces ATP from ADP in the presence of a proton gradient across the membrane which is generated by electron transport complexes of the respiratory chain. F-type ATPases consist of two structural domains, F(1) - containing the extramembraneous catalytic core and F(0) - containing the membrane proton channel, linked together by a central stalk and a peripheral stalk. During catalysis, ATP synthesis in the catalytic domain of F(1) is coupled via a rotary mechanism of the central stalk subunits to proton translocation. Part of the complex F(0) domain. Minor subunit located with subunit a in the membrane. The polypeptide is ATP synthase protein 8 (MT-ATP8) (Cervus elaphus hippelaphus (European red deer)).